Reading from the N-terminus, the 1898-residue chain is MAPEPAPGRRMVPLVPALVMLGLMAGAHGDSKPVFVKVPEDQTGLSGGVASFVCQATGEPKPRITWMKKGKKVSSQRFEVIEFDDGAGSVLRIQPLRVQRDEAIYECTATNSLGEINTSAKLSVLEEDQLPSGFPTIDMGPQLKVVEKGRTATMLCAAGGNPDPEISWFKDFLPVDPAASNGRIKQLRSGALQIESSEESDQGKYECVATNSAGTRYSAPANLYVRVRRVAPRFSIPPSSQEVMPGGSVNLTCVAVGAPMPYVKWMMGAEELTKEDEMPVGRNVLELSNVMRSANYTCVAISSLGMIEATAQVTVKALPKPPIDLVVTETTATSVTLTWDSGNTEPVSFYGIQYRAAGTDGPFQEVDGVASTRYSIGGLSPFSEYAFRVLAVNSIGRGPPSEAVRARTGEQAPSSPPRRVQARMLSASTMLVQWEPPEEPNGLVRGYRVYYTPDSRRPLSAWHKHNTDAGLLTTVGSLLPGITYSLRVLAFTAVGDGPPSPTIQVKTQQGVPAQPADFQANAESDTRIQLSWLLPPQERIVKYELVYWAAEDEGQQHKVTFDPTSSYTLEDLKPDTLYHFQLAARSDLGVGVFTPTVEARTAQSTPSAPPQKVTCVSTGSTTVRVSWVPPPADSRNGIITQYSVAYEAVDGEDRKRHVVDGISREHSSWDLLGLEKWTEYRVWVRAHTDVGPGPESSPVLVRTDEDVPSGPPRKVEVEPLNSTAVHVSWKLPVPNKQHGQIRGYQVTYVRLENGEPRGQPIIQDVMLAEAQETTISGLTPETTYSITVAAYTTKGDGARSKPKVVTTTGAVPGRPTMMVSTTAMHTALLQWHPPKELPGELLGYRLQYRRADEARPNTIDFGKDDQHFTVTGLHKGATYVFRLAAKNRAGPGEEFEKEITTPEDVPSGFPQNLRVTGLTTSTTELTWDPPVLAERNGHITNYTVVYRDINSQLELQNVTNDTHLTLLGLKPDTTYDIKVRAHTSKGAGPLSPSIQSRTMPVEQVFAKNFRVAAAMKTSVLLSWEVPDSYKSAVPFKILYNGQSVEVDGHSMRKLIADLQPNTEYSFVLMNRGSSAGGLQHLVSIRTAPDLLPQKPLPASAFIEDGRFSLSMPQVQDPSLVRWFYIVVVPIDRVGGNLLAPRWNTPEELELDELLEAIEQGEEKQRRRRRQAERLKPYVAAQVDVLPDTFTLGDKKSYRGFYNRPLSPDLSYQCFVLASLKEPMDQKRYASSPYSDEIVVQVTPAQQQEEPEMLWVTGPVLAVILIILIVIAILLFKRKRTHSPSSKDEQSIGLKDSLLAHSSDPVEMRRLNYQTPGMRDHPPIPITDLADNIERLKANDGLKFSQEYESIDPGQQFTWENSNSEVNKPKNRYANVIAYDHSRVLLTSIDGVPGSDYINANYIDGYRKQNAYIATQGPLPETMGDFWRMVWEQRTATVVMMTRLEEKSRVKCDQYWPVRGTETYGLIQVTLVDTVELATYTMRTFALHKSGSSEKRELRQFQFMAWPDHGVPEYPTPILAFLRRVKACNPLDAGPMVVHCSAGVGRTGCFIVIDAMLERMKHEKTVDIYGHVTCMRSQRNYMVQTEDQYVFIHEALLEAAMCGHTEVLARNLYAHIQKLGQVPPGESVTAMELEFKLLANSKAHTSRFVSANLPCNKFKNRLVNIMPYELTRVCLQPIRGVEGSDYINASFLDGYRQQKAYIATQGPLAESTEDFWRMLWEHNSTIIVMLTKLREMGREKCHQYWPAERSARYQYFVVDPMAEYNMPQYILREFKVTDARDGQSRTIRQFQFTDWPEQGVPKTGEGFIDFIGQVHKTKEQFGQDGPITVHCSAGVGRTGVFITLSIVLERMRYEGVVDMFQTVKTLRTQRPAMVQTEDQYQLCYRAALEYLGSFDHYAT.

The signal sequence occupies residues Met-1 to Gly-29. Over Asp-30–Trp-1254 the chain is Extracellular. Ig-like C2-type domains follow at residues Pro-33–Ser-123, Pro-135–Tyr-224, and Pro-232–Thr-314. Cys-54 and Cys-107 are joined by a disulfide. Lys-68–Arg-77 contributes to the heparin binding site. A glycan (N-linked (GlcNAc...) asparagine) is linked at Asn-117. A disulfide bridge links Cys-156 with Cys-207. 2 N-linked (GlcNAc...) asparagine glycosylation sites follow: Asn-250 and Asn-295. Cys-253 and Cys-298 are disulfide-bonded. Fibronectin type-III domains lie at Pro-321 to Gln-411, Pro-416 to Gly-510, Gln-514 to Ser-604, Pro-609 to Asp-706, Pro-711 to Ala-810, Val-811 to Asp-904, Phe-909 to Val-1001, and Phe-1005 to Asp-1089. The interval Gly-693–Pro-712 is disordered. An N-linked (GlcNAc...) asparagine glycan is attached at Asn-721. Residues Asn-941, Asn-957, and Asn-960 are each glycosylated (N-linked (GlcNAc...) asparagine). A helical membrane pass occupies residues Val-1255–Phe-1275. At Lys-1276–Thr-1898 the chain is on the cytoplasmic side. Ser-1296 bears the Phosphoserine mark. 2 Tyrosine-protein phosphatase domains span residues Phe-1343–Ala-1598 and Met-1630–Tyr-1889. Substrate is bound by residues Asp-1507, Cys-1539–Arg-1545, and Gln-1583. The active-site Phosphocysteine intermediate is Cys-1539. Catalysis depends on Cys-1830, which acts as the Phosphocysteine intermediate.

Belongs to the protein-tyrosine phosphatase family. Receptor class 2A subfamily. As to quaternary structure, interacts with GRIP1. Interacts with PPFIA1, PPFIA2 and PPFIA3. Interacts with PTPRF. Expressed in the cell of the T lineage but not in cells of any other hemopoietic lineage.

The protein localises to the membrane. The enzyme catalyses O-phospho-L-tyrosyl-[protein] + H2O = L-tyrosyl-[protein] + phosphate. Possible cell adhesion receptor. It possesses an intrinsic protein tyrosine phosphatase activity (PTPase) and dephosphorylates EPHA2 regulating its activity. This Mus musculus (Mouse) protein is Receptor-type tyrosine-protein phosphatase F (Ptprf).